We begin with the raw amino-acid sequence, 273 residues long: Undecaprenyl-diphosphatase (273 aa).

8 consecutive transmembrane segments (helical) span residues 18 to 40, 45 to 65, 92 to 112, 114 to 134, 151 to 171, 189 to 209, 225 to 245, and 253 to 273; these read GLTEFLPVSSTGHMILVGSLLGF, AKTFEVIIQLGSILAVVVVFW, GHILLGMIPAVVLGLVFHEQI, AIFAPIYVMYALVVGGVLLLA, LTYLQAFLIGCFQCLALWPGF, YAASEFSFILAVPMMLGATVL, MFAIGFVTAFVVALLAIKFFL, and FVPFAIYRFILAVVVYWILIG.

Belongs to the UppP family.

The protein resides in the cell inner membrane. It carries out the reaction di-trans,octa-cis-undecaprenyl diphosphate + H2O = di-trans,octa-cis-undecaprenyl phosphate + phosphate + H(+). In terms of biological role, catalyzes the dephosphorylation of undecaprenyl diphosphate (UPP). Confers resistance to bacitracin. This is Undecaprenyl-diphosphatase from Sodalis glossinidius (strain morsitans).